Reading from the N-terminus, the 193-residue chain is Apoptosis-associated speck-like protein containing a CARD (193 aa).

In terms of domain architecture, Pyrin spans 1–91; it reads MGRARDAILD…AEQLQTTKEE (91 aa). Residues K55 and K172 each participate in a glycyl lysine isopeptide (Lys-Gly) (interchain with G-Cter in ubiquitin) cross-link. The CARD domain maps to 105 to 193; that stretch reads STARTGHFVD…PYLVMDLEQS (89 aa). Position 193 is a phosphoserine (S193).

Self-associates; enforced oligomerization induces apoptosis, NF-kappa-B regulation and interleukin-1 beta secretion. Homooligomers can form disk-like particles of approximately 12 nm diameter and approximately 1 nm height. Component of several inflammasomes containing one pattern recognition receptor/sensor, such as NLRP2, NLRP3, NLRP6, NLRC4, AIM2, MEFV or NOD2, and probably NLRC4 or NLRP12. Major component of the ASC pyroptosome, a 1-2 um supramolecular assembly (one per macrophage cell) which consists of oligomerized PYCARD dimers and CASP1. Interacts with CASP1 (precursor form); the interaction induces activation of CASP1 leading to the processing of interleukin-1 beta; PYCARD competes with RIPK2 for binding to CASP1. Interacts with NLRP3; the interaction requires the homooligomerization of NLRP3. Interacts with NLRP2, NLRC4, MEFV, CARD16, AIM2, NOD2, RIGI, RIPK2, PYDC1, PYDC2, NLRP10, CHUK, IKBKB and BAX. Interacts with CASP8. Component of the AIM2 PANoptosome complex, a multiprotein complex that drives inflammatory cell death (PANoptosis). In terms of processing, phosphorylated. 'Lys-63'-linked polyubiquitination by TRAF3 is critical for speck formation and inflammasome activation. 'Lys-63'-linked deubiquitinated by USP50; a crucial step for NLRP3-mediated inflammasome activation. 'Lys-63'-linked polyubiquitination by PELI1 is also critical for speck formation and inflammasome activation. Deubiquitinated by USP3 that cleaves 'Lys-48'-linked ubiquitin chains and strengthens its stability by blocking proteasomal degradation. In terms of tissue distribution, expressed in small intestine, colon, thymus, spleen, brain, heart, skeletal muscle, kidney, lung and liver.

It is found in the cytoplasm. It localises to the inflammasome. The protein resides in the endoplasmic reticulum. Its subcellular location is the mitochondrion. The protein localises to the nucleus. Its function is as follows. Functions as a key mediator in apoptosis and inflammation. Promotes caspase-mediated apoptosis involving predominantly caspase-8 and also caspase-9 in a probable cell type-specific manner. Involved in activation of the mitochondrial apoptotic pathway, promotes caspase-8-dependent proteolytic maturation of BID independently of FADD in certain cell types and also mediates mitochondrial translocation of BAX and activates BAX-dependent apoptosis coupled to activation of caspase-9, -2 and -3. Involved in innate immune response by acting as an integral adapter in the assembly of various inflammasomes (NLRP2, NLRP3, NLRP6 and AIM2) which recruit and activate caspase-1 leading to processing and secretion of pro-inflammatory cytokines. Caspase-1-dependent inflammation leads to macrophage pyroptosis, a form of cell death. The function as activating adapter in different types of inflammasomes is mediated by the pyrin and CARD domains and their homotypic interactions. Clustered PYCARD nucleates the formation of caspase-1 filaments through the interaction of their respective CARD domains, acting as a platform for of caspase-1 polymerization. In the NLRC4 inflammasomes seems not be required but facilitates the processing of procaspase-1. In cooperation with NOD2 involved in an inflammasome activated by bacterial muramyl dipeptide leading to caspase-1 activation. May be involved in RIGI-triggered pro-inflammatory responses and inflammasome activation. In collaboration with AIM2 which detects cytosolic double-stranded DNA may also be involved in a caspase-1-independent cell death that involves caspase-8. In adaptive immunity may be involved in maturation of dendritic cells to stimulate T-cell immunity and in cytoskeletal rearrangements coupled to chemotaxis and antigen uptake may be involved in post-transcriptional regulation of the guanine nucleotide exchange factor DOCK2; the latter function is proposed to involve the nuclear form. Also involved in transcriptional activation of cytokines and chemokines independent of the inflammasome; this function may involve AP-1, NF-kappa-B, MAPK and caspase-8 signaling pathways. For regulation of NF-kappa-B activating and inhibiting functions have been reported. Modulates NF-kappa-B induction at the level of the IKK complex by inhibiting kinase activity of CHUK and IKBK. Proposed to compete with RIPK2 for association with CASP1 thereby down-regulating CASP1-mediated RIPK2-dependent NF-kappa-B activation and activating interleukin-1 beta processing. Modulates host resistance to DNA virus infection, probably by inducing the cleavage of and inactivating CGAS in presence of cytoplasmic double-stranded DNA. The sequence is that of Apoptosis-associated speck-like protein containing a CARD (Pycard) from Mus musculus (Mouse).